Consider the following 288-residue polypeptide: MWLEGSPLAVLAAVSFLLSVLAAAQGSGEYCHGWLDAQAVWRDGFQCPERFDGDDSTICCGKCELRYCCSSAEARLDQGVCNNDRQQGAPDHNRPDKDSPDSTAVPIYVPFLIVGSVFVAFIIVGSLVAICCCRCLRPKQEPQQSRAPGSNRLMETIPMISSASTSRGSSSRQSSTAASSSSSANSGARPPPTRSQTNCCLPEGAMNNVYVNMPTNFSVLNCQQATQLVQHQGQYLHPQFVGYAVPHDSVPMTPVPQFIDGLQGGYRQMQSPYPHSNPEQMMYPAVTV.

The signal sequence occupies residues 1–23 (MWLEGSPLAVLAAVSFLLSVLAA). Topologically, residues 24–110 (AQGSGEYCHG…DSTAVPIYVP (87 aa)) are extracellular. Residues 111 to 131 (FLIVGSVFVAFIIVGSLVAIC) traverse the membrane as a helical segment. Residues 132-288 (CCRCLRPKQE…EQMMYPAVTV (157 aa)) are Cytoplasmic-facing. Residues 161–188 (SSASTSRGSSSRQSSTAASSSSSANSGA) are compositionally biased toward low complexity. The segment at 161 to 198 (SSASTSRGSSSRQSSTAASSSSSANSGARPPPTRSQTN) is disordered.

The protein belongs to the shisa family. In terms of assembly, interacts with fzd8 and fgfr1.

Its subcellular location is the endoplasmic reticulum membrane. In terms of biological role, plays an essential role in the maturation of presomitic mesoderm cells by individual attenuation of both fgf and wnt signaling. Inhibits both wnt and fgf signaling through the regulation of protein maturation and cell surface transportation of their receptors within the endoplasmic reticulum. The sequence is that of Protein shisa-2 (shisa2) from Xenopus laevis (African clawed frog).